The sequence spans 131 residues: MSMSDPIADMLTRIRNAQQVEKMAVSMPSSKVKVAIAKVLKDEGYIEDFAVRGEAGKPELELQLKYYAGRPVIEHIERVSKPGLRIYKGAGDLPRVKNGLGVAIVSTSSGVMTDRHARAKGVGGEVLCFVA.

It belongs to the universal ribosomal protein uS8 family. In terms of assembly, part of the 30S ribosomal subunit. Contacts proteins S5 and S12.

One of the primary rRNA binding proteins, it binds directly to 16S rRNA central domain where it helps coordinate assembly of the platform of the 30S subunit. In Thiobacillus denitrificans (strain ATCC 25259 / T1), this protein is Small ribosomal subunit protein uS8.